A 554-amino-acid polypeptide reads, in one-letter code: Phosphomethylpyrimidine synthase (554 aa).

Substrate-binding positions include Asn-188, Met-217, Tyr-246, His-282, 302–304 (SRG), 343–346 (DGLR), and Glu-382. Position 386 (His-386) interacts with Zn(2+). Substrate is bound at residue Tyr-409. His-450 lines the Zn(2+) pocket. [4Fe-4S] cluster contacts are provided by Cys-530, Cys-533, and Cys-538.

It belongs to the ThiC family. As to quaternary structure, homodimer. The cofactor is [4Fe-4S] cluster.

The enzyme catalyses 5-amino-1-(5-phospho-beta-D-ribosyl)imidazole + S-adenosyl-L-methionine = 4-amino-2-methyl-5-(phosphooxymethyl)pyrimidine + CO + 5'-deoxyadenosine + formate + L-methionine + 3 H(+). The protein operates within cofactor biosynthesis; thiamine diphosphate biosynthesis. Functionally, catalyzes the synthesis of the hydroxymethylpyrimidine phosphate (HMP-P) moiety of thiamine from aminoimidazole ribotide (AIR) in a radical S-adenosyl-L-methionine (SAM)-dependent reaction. The chain is Phosphomethylpyrimidine synthase from Coxiella burnetii (strain CbuK_Q154) (Coxiella burnetii (strain Q154)).